Here is a 238-residue protein sequence, read N- to C-terminus: Uridylate kinase (238 aa).

12–15 (KLSG) is an ATP binding site. Gly-54 is a binding site for UMP. 2 residues coordinate ATP: Gly-55 and Arg-59. UMP-binding positions include Asp-74 and 135 to 142 (TGNPYFTT). Residues Thr-162, Asn-163, Tyr-168, and Asp-171 each coordinate ATP.

Belongs to the UMP kinase family. In terms of assembly, homohexamer.

It is found in the cytoplasm. The catalysed reaction is UMP + ATP = UDP + ADP. The protein operates within pyrimidine metabolism; CTP biosynthesis via de novo pathway; UDP from UMP (UMPK route): step 1/1. Inhibited by UTP. Catalyzes the reversible phosphorylation of UMP to UDP. This chain is Uridylate kinase, found in Rhodopseudomonas palustris (strain ATCC BAA-98 / CGA009).